Here is an 80-residue protein sequence, read N- to C-terminus: Probable Rubredoxin-1 (80 aa).

A Rubredoxin-like domain is found at 19–72 (YRKYKCKVCGWVYDPLKGDPSQNIPPKTPFEELPDTWICPVCRGKVGKESFEPL). Fe cation-binding residues include C24, C27, C57, and C60.

The protein belongs to the rubredoxin family. It depends on Fe(3+) as a cofactor.

Rubredoxin is a small nonheme, iron protein lacking acid-labile sulfide. Its single Fe, chelated to 4 Cys, functions as an electron acceptor and may also stabilize the conformation of the molecule. This Methanocaldococcus jannaschii (strain ATCC 43067 / DSM 2661 / JAL-1 / JCM 10045 / NBRC 100440) (Methanococcus jannaschii) protein is Probable Rubredoxin-1.